Here is a 376-residue protein sequence, read N- to C-terminus: Succinyl-diaminopimelate desuccinylase (376 aa).

Position 67 (His-67) interacts with Zn(2+). Asp-69 is a catalytic residue. Asp-100 contributes to the Zn(2+) binding site. Glu-134 functions as the Proton acceptor in the catalytic mechanism. Glu-135, Glu-163, and His-349 together coordinate Zn(2+).

Belongs to the peptidase M20A family. DapE subfamily. Homodimer. It depends on Zn(2+) as a cofactor. The cofactor is Co(2+).

The enzyme catalyses N-succinyl-(2S,6S)-2,6-diaminopimelate + H2O = (2S,6S)-2,6-diaminopimelate + succinate. Its pathway is amino-acid biosynthesis; L-lysine biosynthesis via DAP pathway; LL-2,6-diaminopimelate from (S)-tetrahydrodipicolinate (succinylase route): step 3/3. Functionally, catalyzes the hydrolysis of N-succinyl-L,L-diaminopimelic acid (SDAP), forming succinate and LL-2,6-diaminopimelate (DAP), an intermediate involved in the bacterial biosynthesis of lysine and meso-diaminopimelic acid, an essential component of bacterial cell walls. The protein is Succinyl-diaminopimelate desuccinylase of Xanthomonas campestris pv. campestris (strain 8004).